A 288-amino-acid chain; its full sequence is 33 kDa chaperonin (288 aa).

2 disulfide bridges follow: Cys236–Cys238 and Cys269–Cys272.

It belongs to the HSP33 family. Under oxidizing conditions two disulfide bonds are formed involving the reactive cysteines. Under reducing conditions zinc is bound to the reactive cysteines and the protein is inactive.

Its subcellular location is the cytoplasm. Functionally, redox regulated molecular chaperone. Protects both thermally unfolding and oxidatively damaged proteins from irreversible aggregation. Plays an important role in the bacterial defense system toward oxidative stress. This chain is 33 kDa chaperonin, found in Lactococcus lactis subsp. cremoris (strain SK11).